The primary structure comprises 674 residues: Endopolyphosphatase (674 aa).

Over Met1–Ser21 the chain is Cytoplasmic. 2 propeptides (removed in mature form) span residues Met1–Lys83 and Glu385–Asp674. Lys6 is covalently cross-linked (Glycyl lysine isopeptide (Lys-Gly) (interchain with G-Cter in ubiquitin)). A helical; Signal-anchor for type II membrane protein membrane pass occupies residues Leu22 to Phe42. At Gln43–Asp674 the chain is on the vacuolar side. An N-linked (GlcNAc...) asparagine glycan is attached at Asn58. Residues Met384–Thr403 are disordered. N-linked (GlcNAc...) asparagine glycosylation is found at Asn505 and Asn511.

It belongs to the endopolyphosphatase PPN1 family. As to quaternary structure, homotetramer. Interacts with PPN2. Requires Mn(2+) as cofactor. The cofactor is Mg(2+). Co(2+) is required as a cofactor. Zn(2+) serves as cofactor. Post-translationally, processing by proteases in the vacuole is required for activation. In terms of processing, ubiquitinated. Ubiquitination mediates sorting into internal vesicles in late endosomes. TUL1 and RSP5 are required for ubiquitination. Other cytoplasmic Lys residues than Lys-6 may also be ubiquitinated. N-glycosylated. N-glycosylation is essential for the protease-mediated maturation.

Its subcellular location is the vacuole membrane. The protein localises to the cytoplasm. It carries out the reaction [phosphate](n+1) + n H2O = (n+1) phosphate + n H(+). The enzyme catalyses [phosphate](n) + H2O = [phosphate](n-1) + phosphate + H(+). The catalysed reaction is dATP + H2O = dADP + phosphate + H(+). With respect to regulation, inhibited by heparin and EDTA. Catalyzes the hydrolysis of inorganic polyphosphate (polyP) chains of many hundreds of phosphate residues into shorter lengths. Has both exopolyphosphatase and endopolyphosphatase activities at different ratios depending on divalent cations by cleaving phosphate from the chain end and by fragmenting long-chain polymers into shorter ones, respectively. The limited digestion products are 1 and 3 P(i) residues. Also releases phosphate from dATP. dATP phosphohydrolase activity is about 7-fold lower than the exopolyphosphatase activity. The protein is Endopolyphosphatase of Saccharomyces cerevisiae (strain ATCC 204508 / S288c) (Baker's yeast).